A 155-amino-acid polypeptide reads, in one-letter code: Endoribonuclease YbeY (155 aa).

Zn(2+) is bound by residues His116, His120, and His126.

This sequence belongs to the endoribonuclease YbeY family. The cofactor is Zn(2+).

It is found in the cytoplasm. Functionally, single strand-specific metallo-endoribonuclease involved in late-stage 70S ribosome quality control and in maturation of the 3' terminus of the 16S rRNA. The chain is Endoribonuclease YbeY from Thermobifida fusca (strain YX).